We begin with the raw amino-acid sequence, 133 residues long: MAYSSCLNRSLKPNKLLLRRIDGAIQVRSHVDLTFYSLVGSGRSGGGTTAPLFSRIHTSLISVWRAISRAQVEVRPQWENGAPNNASSQTKNYEITLSFWGDGGIVPFEPFFHAFPGGLEKAAINRTSLILPS.

Belongs to the ycf68 family.

The protein localises to the plastid. It is found in the chloroplast. This is an uncharacterized protein from Oryza sativa subsp. japonica (Rice).